Here is a 639-residue protein sequence, read N- to C-terminus: Chaperone protein HtpG (639 aa).

An a; substrate-binding region spans residues 1 to 343; the sequence is MEATATKEHL…SNDLPLNVSR (343 aa). Residues 344-564 form a b region; it reads EILQESKDIE…THDMSGNLER (221 aa). Positions 565-639 are c; that stretch reads LLKSAGQKVT…QLFLSTGSKE (75 aa).

The protein belongs to the heat shock protein 90 family. In terms of assembly, homodimer.

The protein resides in the cytoplasm. Functionally, molecular chaperone. Has ATPase activity. This is Chaperone protein HtpG from Nitrosospira multiformis (strain ATCC 25196 / NCIMB 11849 / C 71).